A 432-amino-acid chain; its full sequence is Serine/threonine-protein kinase CDG1 (432 aa).

S-palmitoyl cysteine attachment occurs at residues cysteine 4 and cysteine 6. A compositionally biased stretch (basic residues) spans 15-24; it reads LKDKSHKRSI. Residues 15–47 form a disordered region; the sequence is LKDKSHKRSIRNQTSSSSAQPAGTAKEVDSSSS. Residues 25-35 show a composition bias toward polar residues; it reads RNQTSSSSAQP. Serine 44 and serine 47 each carry phosphoserine. The Protein kinase domain maps to 74–354; sequence FRNESLIGRG…SQVVECLKYI (281 aa). ATP is bound by residues 80-88 and lysine 102; that span reads IGRGGFGTV. The residue at position 147 (tyrosine 147) is a Phosphotyrosine. The active-site Proton acceptor is the aspartate 200. Phosphoserine occurs at positions 204 and 234. 2 positions are modified to phosphothreonine: threonine 235 and threonine 240. A Phosphotyrosine modification is found at tyrosine 248.

This sequence belongs to the protein kinase superfamily. Ser/Thr protein kinase family. As to quaternary structure, interacts with BSU1, BSL1 and BRI1. Post-translationally, phosphorylated at Ser-44, Ser-47 and Ser-234 by BRI1. As to expression, expressed at high levels in the stamen and pollen grains. Expressed at a very low level in vegetative tissues.

It is found in the cell membrane. It carries out the reaction L-seryl-[protein] + ATP = O-phospho-L-seryl-[protein] + ADP + H(+). The enzyme catalyses L-threonyl-[protein] + ATP = O-phospho-L-threonyl-[protein] + ADP + H(+). Activated by phosphorylation at Ser-234. Its function is as follows. Serine/threonine-protein kinase involved in the positive regulation of brassinosteroid (BR) signaling and plant growth. Mediates BR signal transduction from BRI1 receptor kinase to BSU1 phosphatase. After activation by phosphorylation at Ser-234 by BRI1, CDG1 phosphorylates BSU1 at 'Ser-764' in the phosphatase domain, increasing the ability of BSU1 to inactivate the negative regulator of BR signaling ASK7/BIN2 by dephosphorylation at 'Tyr-200'. The full kinase activity of CDG1 is required for its biological function. This is Serine/threonine-protein kinase CDG1 from Arabidopsis thaliana (Mouse-ear cress).